The following is a 726-amino-acid chain: Sensory/regulatory protein RpfC (726 aa).

Residues methionine 1–glutamine 22 lie on the Periplasmic side of the membrane. Residues methionine 1–glutamine 22 are sensor. The chain crosses the membrane as a helical span at residues asparagine 23–arginine 40. Over tyrosine 41 to alanine 51 the chain is Cytoplasmic. A helical membrane pass occupies residues threonine 52 to leucine 72. At arginine 73–alanine 94 the chain is on the periplasmic side. The chain crosses the membrane as a helical span at residues isoleucine 95–isoleucine 115. The Cytoplasmic segment spans residues glycine 116 to arginine 127. Residues alanine 128 to lysine 148 traverse the membrane as a helical segment. Residues alanine 149–proline 151 are Periplasmic-facing. Residues tyrosine 152 to leucine 172 traverse the membrane as a helical segment. Residues arginine 173–glutamate 726 lie on the Cytoplasmic side of the membrane. Residues asparagine 195–isoleucine 417 form the Histidine kinase domain. Phosphohistidine; by autocatalysis is present on histidine 198. In terms of domain architecture, Response regulatory spans arginine 463–alanine 581. A 4-aspartylphosphate modification is found at aspartate 512. One can recognise an HPt domain in the interval glycine 618–arginine 711. At histidine 657 the chain carries Phosphohistidine.

As to quaternary structure, at low DSF concentrations, interacts with RpfF. Post-translationally, autophosphorylated. Activation may require a sequential transfer of a phosphate group from a His in the primary transmitter domain, to an Asp in the receiver domain and to a His in the secondary transmitter domain.

It is found in the cell inner membrane. The enzyme catalyses ATP + protein L-histidine = ADP + protein N-phospho-L-histidine.. Binding of DSF to the sensor region causes allosteric change, which facilitates RpfC autophosphorylation. Hybrid sensor kinase that regulates diverse biological functions through two distinct molecular mechanisms. At low cell density, the extracellular concentration of the diffusible signaling factor (DSF) is below a threshold, and unphosphorylated RpfC is involved in the negative regulation of DSF synthesis, via direct interaction with the DSF synthase RpfF. Interaction prevents synthesis of DSF, which remains at a basal level. This activity does not involve the phosphorelay mechanism and is not dependent on RpfG. Is also member of the two-component regulatory system RpfG/RpfC, which is involved in the perception and response to DSF, which is essential for cell-cell signaling. At high cell density, the level of extracellular DSF increases and binding of DSF to the sensor region of RpfC causes autophosphorylation of RpfC, which results in the release of RpfF and the activation of RpfG via a four-step phosphorelay. Activation of RpfG leads to the positive regulation of biofilm dispersal and the production of virulence factors. The protein is Sensory/regulatory protein RpfC (rpfC) of Xanthomonas campestris pv. campestris (strain 8004).